The following is a 134-amino-acid chain: ATP synthase epsilon chain (134 aa).

The protein belongs to the ATPase epsilon chain family. F-type ATPases have 2 components, CF(1) - the catalytic core - and CF(0) - the membrane proton channel. CF(1) has five subunits: alpha(3), beta(3), gamma(1), delta(1), epsilon(1). CF(0) has three main subunits: a, b and c.

The protein localises to the cell inner membrane. Its function is as follows. Produces ATP from ADP in the presence of a proton gradient across the membrane. In Rhodospirillum rubrum (strain ATCC 11170 / ATH 1.1.1 / DSM 467 / LMG 4362 / NCIMB 8255 / S1), this protein is ATP synthase epsilon chain.